The chain runs to 153 residues: D-aminoacyl-tRNA deacylase (153 aa).

Positions 142-143 (GP) match the Gly-cisPro motif, important for rejection of L-amino acids motif.

This sequence belongs to the DTD family. As to quaternary structure, homodimer.

It localises to the cytoplasm. The enzyme catalyses glycyl-tRNA(Ala) + H2O = tRNA(Ala) + glycine + H(+). It catalyses the reaction a D-aminoacyl-tRNA + H2O = a tRNA + a D-alpha-amino acid + H(+). Its function is as follows. An aminoacyl-tRNA editing enzyme that deacylates mischarged D-aminoacyl-tRNAs. Also deacylates mischarged glycyl-tRNA(Ala), protecting cells against glycine mischarging by AlaRS. Acts via tRNA-based rather than protein-based catalysis; rejects L-amino acids rather than detecting D-amino acids in the active site. By recycling D-aminoacyl-tRNA to D-amino acids and free tRNA molecules, this enzyme counteracts the toxicity associated with the formation of D-aminoacyl-tRNA entities in vivo and helps enforce protein L-homochirality. The polypeptide is D-aminoacyl-tRNA deacylase (Cupriavidus taiwanensis (strain DSM 17343 / BCRC 17206 / CCUG 44338 / CIP 107171 / LMG 19424 / R1) (Ralstonia taiwanensis (strain LMG 19424))).